We begin with the raw amino-acid sequence, 482 residues long: Long chain base biosynthesis protein 1c (482 aa).

Residues 33 to 53 (FGIHIDGHLVVEGLLIAAILF) traverse the membrane as a helical segment.

It belongs to the class-II pyridoxal-phosphate-dependent aminotransferase family. In terms of assembly, heterodimer with LCB2. Component of the serine palmitoyltransferase (SPT) complex, composed of LCB1 and LCB2. Requires pyridoxal 5'-phosphate as cofactor.

Its subcellular location is the endoplasmic reticulum membrane. The catalysed reaction is L-serine + hexadecanoyl-CoA + H(+) = 3-oxosphinganine + CO2 + CoA. The protein operates within lipid metabolism; sphingolipid metabolism. Its function is as follows. Serine palmitoyltransferase (SPT). The heterodimer formed with LCB2 constitutes the catalytic core. This chain is Long chain base biosynthesis protein 1c, found in Oryza sativa subsp. japonica (Rice).